A 351-amino-acid chain; its full sequence is Putative aminodehydroquinate synthase (351 aa).

NAD(+) contacts are provided by residues 65–68 (EPTK), 97–101 (GTTTD), 121–122 (TS), K134, K143, and 161–164 (YLTT). Zn(2+) is bound by residues E176, H225, and H241.

This sequence belongs to the sugar phosphate cyclases superfamily. aDHQS family. It depends on NAD(+) as a cofactor. The cofactor is Co(2+). Zn(2+) serves as cofactor.

May catalyze the conversion of 3,4-dideoxy-4-amino-D-arabino-heptulosonate 7-phosphate (aDAHP) to 5-deoxy-5-amino-3-dehydroquinate (aDHQ). Probably involved in the formation of 3-amino-5-hydroxybenzoic acid (AHBA), the precursor of rifamycin and related ansamycins. The sequence is that of Putative aminodehydroquinate synthase from Amycolatopsis mediterranei (strain S699) (Nocardia mediterranei).